We begin with the raw amino-acid sequence, 871 residues long: Mitochondrial 15S rRNA processing factor CCM1 (871 aa).

Residues 1-72 constitute a mitochondrion transit peptide; sequence MLGRRLAGAK…EFKLRQLREF (72 aa). PPR repeat units follow at residues 333–369 and 370–404; these read NKEN…DHKP and DAKT…KVDP. The disordered stretch occupies residues 704–724; that stretch reads RPGSSTHLTHSEIKKQPSSQT.

This sequence belongs to the CCM1 family. In terms of assembly, binds to mitochondrial small subunit 15S rRNA.

It localises to the mitochondrion. Functionally, regulates mitochondrial small subunit maturation by controlling 15S rRNA 5'-end processing. Localizes to the 5' precursor of the 15S rRNA in a position that is subsequently occupied by mS47 in the mature yeast mtSSU. Uses structure and sequence-specific RNA recognition, binding to a single-stranded region of the precursor and specifically recognizing bases -6 to -1. The exchange of Ccm1 for mS47 is coupled to the irreversible removal of precursor rRNA that is accompanied by conformational changes of the mitoribosomal proteins uS5m and mS26. These conformational changes signal completion of 5'-end rRNA processing through protection of the mature 5'-end of the 15S rRNA and stabilization of mS47. The removal of the 5' precursor together with the dissociation of Ccm1 may be catalyzed by the 5'-3' exoribonuclease Pet127. Involved in the specific removal of group I introns in mitochondrial encoded transcripts. This chain is Mitochondrial 15S rRNA processing factor CCM1 (CCM1), found in Lachancea thermotolerans (strain ATCC 56472 / CBS 6340 / NRRL Y-8284) (Yeast).